The sequence spans 1361 residues: Xanthine dehydrogenase 1 (1361 aa).

A 2Fe-2S ferredoxin-type domain is found at 15–101 (TEALLYVNGV…GMHVISIEGL (87 aa)). C53, C58, C61, C83, C123, C126, C159, and C161 together coordinate [2Fe-2S] cluster. The region spanning 257–442 (RGNGGITWYR…LSVFLPWTRP (186 aa)) is the FAD-binding PCMH-type domain. FAD is bound by residues 285–292 (LLVGNTEV), F365, 375–379 (CIGGN), D388, L432, and K450. Mo-molybdopterin contacts are provided by Q796 and F827. 2 residues coordinate substrate: E831 and R909. R941 contributes to the Mo-molybdopterin binding site. The substrate site is built by F943 and T1039. A1108 contributes to the Mo-molybdopterin binding site. E1297 functions as the Proton acceptor in the catalytic mechanism.

It belongs to the xanthine dehydrogenase family. Homodimer. [2Fe-2S] cluster is required as a cofactor. The cofactor is FAD. Requires Mo-molybdopterin as cofactor. In terms of tissue distribution, expressed in roots, leaves, stems, flowers and siliques.

It catalyses the reaction xanthine + NAD(+) + H2O = urate + NADH + H(+). It carries out the reaction hypoxanthine + NAD(+) + H2O = xanthine + NADH + H(+). Key enzyme involved in purine catabolism. Catalyzes the oxidation of hypoxanthine to xanthine and the oxidation of xanthine to urate. Regulates the level of ureides and plays an important role during plant growth and development, senescence and response to stresses. Possesses NADH oxidase activity and may contribute to the generation of superoxide anions in planta. The polypeptide is Xanthine dehydrogenase 1 (XDH1) (Arabidopsis thaliana (Mouse-ear cress)).